The following is a 540-amino-acid chain: Chaperonin GroEL (540 aa).

Residues 29-32 (TLGP), 86-90 (DGTTT), G413, 476-478 (NAA), and D492 each bind ATP.

Belongs to the chaperonin (HSP60) family. As to quaternary structure, forms a cylinder of 14 subunits composed of two heptameric rings stacked back-to-back. Interacts with the co-chaperonin GroES.

The protein localises to the cytoplasm. The enzyme catalyses ATP + H2O + a folded polypeptide = ADP + phosphate + an unfolded polypeptide.. Together with its co-chaperonin GroES, plays an essential role in assisting protein folding. The GroEL-GroES system forms a nano-cage that allows encapsulation of the non-native substrate proteins and provides a physical environment optimized to promote and accelerate protein folding. In Streptococcus pneumoniae (strain Hungary19A-6), this protein is Chaperonin GroEL.